We begin with the raw amino-acid sequence, 3974 residues long: Hybrid PKS-NRPS synthetase 1 (3974 aa).

Residues 5–442 (SQKIAIIGSA…GTNAHCLIES (438 aa)) form the Ketosynthase family 3 (KS3) domain. Catalysis depends on for beta-ketoacyl synthase activity residues Cys179, His316, and His362. The segment at 561 to 883 (IFTGQGAQWA…TGILERGLDD (323 aa)) is malonyl-CoA:ACP transacylase (MAT) domain. The segment at 954 to 1079 (HPLLGSRLSA…HDSELGIPES (126 aa)) is N-terminal hotdog fold. Residues 954 to 1251 (HPLLGSRLSA…QVESVKLVPV (298 aa)) are dehydratase (DH) domain. A PKS/mFAS DH domain is found at 954–1257 (HPLLGSRLSA…LVPVITPDAS (304 aa)). Catalysis depends on His986, which acts as the Proton acceptor; for dehydratase activity. The segment at 1107-1257 (TTPISSAKIY…LVPVITPDAS (151 aa)) is C-terminal hotdog fold. Asp1165 serves as the catalytic Proton donor; for dehydratase activity. Positions 1398-1529 (PWNTELRNAI…GYLLLVAKTG (132 aa)) are methyltransferase (MT) domain. The ketoreductase (KR) domain stretch occupies residues 2108–2282 (TYFLAGMTDS…ASIMDTGVVT (175 aa)). A disordered region spans residues 2492-2516 (AGRSASPGASCSDRSLSTRSDETRS). Residues 2498–2509 (PGASCSDRSLST) show a composition bias toward polar residues. The segment at 2560–2994 (APLSPGQAQL…LERLRTSSDQ (435 aa)) is condensation (C) domain. Positions 3021-3423 (DAMAEKYFDQ…DGSLILLGRM (403 aa)) are adenylation (A) (KR) domain. In terms of domain architecture, Carrier spans 3537–3613 (SADQLVEAEV…EMAEKMASVR (77 aa)). Residue Ser3573 is modified to O-(pantetheine 4'-phosphoryl)serine. Positions 3657 to 3940 (VVLTGAADLL…KLEMGEWIAL (284 aa)) are reductase (RED) domain.

The protein in the C-terminal section; belongs to the NRP synthetase family.

Its pathway is secondary metabolite biosynthesis. In terms of biological role, hybrid PKS-NRPS synthetase; part of the hps1-dma1 gene cluster that probably mediates the biosynthesis a derivative of cyclopiazonic acid (CPA). The hybrid polyketide synthase-nonribosomal peptide synthetase (PKS-NRPS) nps1 might incorporates acetyl-CoA, malonyl-CoA, and tryptophan (Trp) and utilizes a C-terminal redox-incompetent reductase domain to make and release the tryptophan tetramic acid, cyclo-acetoacetyl-L-tryptophan (c-AATrp), as the first intermediate in the pathway. In addition, the cluster also includes the tryptophan dimethylallyltransferase dma1, the FAD-dependent oxidoreductase toxD, the cytochrome P450 monooxygenase cyp3.1 and the methyltransferase DOTSEDRAFT_139328; the latter 2 being not present in all CPA-producing fungi but involved in additional modifications that occur in biosynthesis the of a range of CPA and CPA-like products. Further studies are required to clarify whether the CPA-like hps1-dma1 cluster is functional or a non-functional relic reflecting evolution of D.septosporum. The sequence is that of Hybrid PKS-NRPS synthetase 1 from Dothistroma septosporum (strain NZE10 / CBS 128990) (Red band needle blight fungus).